A 340-amino-acid polypeptide reads, in one-letter code: Phenylalanine--tRNA ligase alpha subunit (340 aa).

Glutamate 255 provides a ligand contact to Mg(2+).

Belongs to the class-II aminoacyl-tRNA synthetase family. Phe-tRNA synthetase alpha subunit type 1 subfamily. In terms of assembly, tetramer of two alpha and two beta subunits. Mg(2+) serves as cofactor.

It localises to the cytoplasm. The catalysed reaction is tRNA(Phe) + L-phenylalanine + ATP = L-phenylalanyl-tRNA(Phe) + AMP + diphosphate + H(+). This chain is Phenylalanine--tRNA ligase alpha subunit, found in Moorella thermoacetica (strain ATCC 39073 / JCM 9320).